An 880-amino-acid chain; its full sequence is Probable receptor-like protein kinase At5g38990 (880 aa).

The N-terminal stretch at 1–21 is a signal peptide; that stretch reads MICHVLVIFTILVSAVVDATA. Residues 22-440 lie on the Extracellular side of the membrane; sequence SYEPTDVFLI…GKGKSSHVLP (419 aa). Asn46, Asn136, Asn158, Asn210, Asn256, Asn263, Asn297, and Asn324 each carry an N-linked (GlcNAc...) asparagine glycan. The chain crosses the membrane as a helical span at residues 441 to 461; it reads IIIAVVGSAVALAFFVLVVVL. Topologically, residues 462–880 are cytoplasmic; the sequence is VVMKRKKKSN…FSEINEPKAR (419 aa). A disordered region spans residues 471–505; it reads NESSVDTTNKPSTNSSWGPLLHGTGSTNTKSASSL. Polar residues-rich tracts occupy residues 472-487 and 494-505; these read ESSV…NSSW and TGSTNTKSASSL. Residues 525–810 form the Protein kinase domain; that stretch reads FEEKLIIGVG…EFALQLHETA (286 aa). ATP contacts are provided by residues 531-539 and Lys554; that span reads IGVGGFGSV. Asp653 serves as the catalytic Proton acceptor. Residues 820 to 846 are disordered; sequence LDLMPSGEVGTTTDGEDDLFSRTTGHV.

It belongs to the protein kinase superfamily. Ser/Thr protein kinase family.

The protein resides in the membrane. The protein is Probable receptor-like protein kinase At5g38990 of Arabidopsis thaliana (Mouse-ear cress).